We begin with the raw amino-acid sequence, 723 residues long: MFDTTPHSGRSSPSSSPSLRKRLQLLPPSRPPSAPEPEPGTMVEKGSDSSSEKSGVSGTLSTQSLGSRNFIRNSKKMQSWYSMLCPTYKQRNEDFRKLFSKLPEAERLIVDYSCALQREILLQGRLYLSENWICFYSNIFRWETTISIQLKEVTCLKKEKTAKLIPNAIQICTESEKHFFTSFGARDRCFLLIFRLWQNALLEKTLSPRELWHLVHQCYGSELGLTSEDEDYVCPLQLNGLGSPKEVGDVIALSDISPSGAADRSQEPSPVGSRCGRVTPNLSRASSDADHGAEEDKEDQTDSQLDASSSQTVTPVAEPLSAEPAPPDGPTSNLGPLDLLSREELLTDTSNSSSSTGEEGDLAALLPDLSGRLLINSVFHVGAERLQQMLFSDSPFLQGFLQQRKFTDVTLSPWSSDSKCHQRRVLTYTIPISNQLGPKSASVVETQTLFRRGPQAGGCVVDSEVLTQGIPYQDYFYTAHRYCILGLARNKARLRVSSEIRYRKQPWSLVKSLIEKSSWTGIEDYFHHLDRELAKAEKVSLEEGGKDARGLLSGLRRRKRPLSWRGHRDGPQHPDPDPCTQTSMHTSGSLSSRFSEPSVDQGPGAGIPSALVLISIVLIVLIALNALLFYRLWSLERTAHTFESWHSLALAKGKFPQTATEWAEILALQKHFHSVEVHKWRQILRASVELLDEMKFSLEKLHQGITVPDPPLDTQPHPDDSFP.

Positions 1 to 18 are enriched in low complexity; it reads MFDTTPHSGRSSPSSSPS. The segment at 1–63 is disordered; that stretch reads MFDTTPHSGR…SGVSGTLSTQ (63 aa). Residues 28 to 38 are compositionally biased toward pro residues; the sequence is PSRPPSAPEPE. Residues 93–160 enclose the GRAM domain; it reads EDFRKLFSKL…KEVTCLKKEK (68 aa). The interval 257–337 is disordered; the sequence is SPSGAADRSQ…DGPTSNLGPL (81 aa). Phosphoserine occurs at positions 265, 269, and 273. Positions 302–314 are enriched in polar residues; that stretch reads DSQLDASSSQTVT. Positions 370-541 constitute a VASt domain; that stretch reads SGRLLINSVF…ELAKAEKVSL (172 aa). At Ser-418 the chain carries Phosphoserine. The tract at residues 562 to 601 is disordered; that stretch reads LSWRGHRDGPQHPDPDPCTQTSMHTSGSLSSRFSEPSVDQ. A compositionally biased stretch (basic and acidic residues) spans 566-576; sequence GHRDGPQHPDP. Over residues 579–595 the composition is skewed to polar residues; the sequence is CTQTSMHTSGSLSSRFS. The helical transmembrane segment at 610 to 630 threads the bilayer; sequence ALVLISIVLIVLIALNALLFY.

It is found in the endoplasmic reticulum membrane. It localises to the cell membrane. The protein localises to the cytoplasmic vesicle. Its subcellular location is the autophagosome. Its function is as follows. Cholesterol transporter that mediates non-vesicular transport of cholesterol from the plasma membrane (PM) to the endoplasmic reticulum (ER). Contains unique domains for binding cholesterol and the PM, thereby serving as a molecular bridge for the transfer of cholesterol from the PM to the ER. Plays a crucial role in cholesterol homeostasis and has the unique ability to localize to the PM based on the level of membrane cholesterol. In lipid-poor conditions localizes to the ER membrane and in response to excess cholesterol in the PM is recruited to the endoplasmic reticulum-plasma membrane contact sites (EPCS) which is mediated by the GRAM domain. At the EPCS, the sterol-binding VASt/ASTER domain binds to the cholesterol in the PM and facilitates its transfer from the PM to ER. May play a role in tumor progression. Plays a role in autophagy regulation and is required for biogenesis of the autophagosome. This function in autophagy requires its cholesterol-transfer activity. This chain is Protein Aster-A, found in Rattus norvegicus (Rat).